The following is a 704-amino-acid chain: Elongation factor G (704 aa).

One can recognise a tr-type G domain in the interval 8–291 (ANVRNIGIMA…AVIEYLPSPV (284 aa)). Residues 17-24 (AHIDAGKT), 90-94 (DTPGH), and 144-147 (NKMD) contribute to the GTP site.

This sequence belongs to the TRAFAC class translation factor GTPase superfamily. Classic translation factor GTPase family. EF-G/EF-2 subfamily.

The protein localises to the cytoplasm. In terms of biological role, catalyzes the GTP-dependent ribosomal translocation step during translation elongation. During this step, the ribosome changes from the pre-translocational (PRE) to the post-translocational (POST) state as the newly formed A-site-bound peptidyl-tRNA and P-site-bound deacylated tRNA move to the P and E sites, respectively. Catalyzes the coordinated movement of the two tRNA molecules, the mRNA and conformational changes in the ribosome. The polypeptide is Elongation factor G (Chlorobium phaeobacteroides (strain BS1)).